We begin with the raw amino-acid sequence, 265 residues long: Undecaprenyl-diphosphatase (265 aa).

A run of 7 helical transmembrane segments spans residues 38 to 58, 80 to 100, 107 to 127, 135 to 155, 175 to 195, 213 to 233, and 244 to 264; these read SDMF…IIYW, LIVA…LGFE, PIAW…WAAA, ITWL…VFPG, AAAT…ASGY, ALAI…KWLL, and FAIY…SGLI.

It belongs to the UppP family.

Its subcellular location is the cell inner membrane. The catalysed reaction is di-trans,octa-cis-undecaprenyl diphosphate + H2O = di-trans,octa-cis-undecaprenyl phosphate + phosphate + H(+). Its function is as follows. Catalyzes the dephosphorylation of undecaprenyl diphosphate (UPP). Confers resistance to bacitracin. This is Undecaprenyl-diphosphatase from Rhizobium etli (strain CIAT 652).